The primary structure comprises 1210 residues: V-type proton ATPase 116 kDa subunit a 4 (1210 aa).

The Cytoplasmic segment spans residues methionine 1–phenylalanine 715. The span at serine 259–proline 271 shows a compositional bias: low complexity. The tract at residues serine 259–methionine 292 is disordered. Basic and acidic residues predominate over residues proline 275–serine 291. Residues phenylalanine 339–asparagine 405 adopt a coiled-coil conformation. The helical transmembrane segment at alanine 716–isoleucine 736 threads the bilayer. The Extracellular segment spans residues arginine 737–tyrosine 760. Residues isoleucine 761 to alanine 781 form a helical membrane-spanning segment. At lysine 782–alanine 855 the chain is on the cytoplasmic side. The helical transmembrane segment at serine 856–isoleucine 876 threads the bilayer. Residues histidine 877–valine 892 lie on the Extracellular side of the membrane. The helical transmembrane segment at isoleucine 893–phenylalanine 913 threads the bilayer. The Cytoplasmic portion of the chain corresponds to serine 914 to threonine 976. A helical membrane pass occupies residues isoleucine 977–valine 997. The Extracellular segment spans residues arginine 998–proline 1127. 3 N-linked (GlcNAc...) asparagine glycosylation sites follow: asparagine 1010, asparagine 1019, and asparagine 1118. Residues valine 1128–methionine 1148 form a helical membrane-spanning segment. The Cytoplasmic portion of the chain corresponds to glutamate 1149–isoleucine 1210.

This sequence belongs to the V-ATPase 116 kDa subunit family. In terms of assembly, V-ATPase is a heteromultimeric enzyme made up of two complexes: the ATP-hydrolytic V1 complex and the proton translocation V0 complex. The V1 complex consists of three catalytic AB heterodimers that form a heterohexamer, three peripheral stalks each consisting of EG heterodimers, one central rotor including subunits D and F, and the regulatory subunits C and H. The proton translocation complex V0 consists of the proton transport subunit a, a ring of proteolipid subunits c9c'', rotary subunit d, subunits e and f, and the accessory subunits vah-19/Ac45 and vah-20/PRR. In terms of tissue distribution, expressed in uterus.

The protein localises to the membrane. Subunit of the V0 complex of vacuolar(H+)-ATPase (V-ATPase), a multisubunit enzyme composed of a peripheral complex (V1) that hydrolyzes ATP and a membrane integral complex (V0) that translocates protons. V-ATPase is responsible for acidifying and maintaining the pH of intracellular compartments and in some cell types, is targeted to the plasma membrane, where it is responsible for acidifying the extracellular environment. This is V-type proton ATPase 116 kDa subunit a 4 from Caenorhabditis elegans.